Consider the following 188-residue polypeptide: Putative 3-methyladenine DNA glycosylase (188 aa).

It belongs to the DNA glycosylase MPG family.

This chain is Putative 3-methyladenine DNA glycosylase, found in Ehrlichia ruminantium (Cowdria ruminantium).